The sequence spans 95 residues: Small ribosomal subunit protein bS18 (95 aa).

It belongs to the bacterial ribosomal protein bS18 family. Part of the 30S ribosomal subunit. Forms a tight heterodimer with protein bS6.

Functionally, binds as a heterodimer with protein bS6 to the central domain of the 16S rRNA, where it helps stabilize the platform of the 30S subunit. This chain is Small ribosomal subunit protein bS18, found in Rickettsia prowazekii (strain Madrid E).